Consider the following 290-residue polypeptide: 4-hydroxybenzoate octaprenyltransferase (290 aa).

8 helical membrane passes run 23 to 43 (IGTL…GKGV), 46 to 66 (LSIL…GCVV), 99 to 119 (LFVV…AMTI), 141 to 161 (LPQF…YAAV), 170 to 190 (WLLL…YAMV), 213 to 233 (LIVG…GYLT), 234 to 254 (QMSG…IHQQ), and 268 to 288 (AFMD…LSYW).

The protein belongs to the UbiA prenyltransferase family. Requires Mg(2+) as cofactor.

The protein localises to the cell inner membrane. The catalysed reaction is all-trans-octaprenyl diphosphate + 4-hydroxybenzoate = 4-hydroxy-3-(all-trans-octaprenyl)benzoate + diphosphate. It functions in the pathway cofactor biosynthesis; ubiquinone biosynthesis. In terms of biological role, catalyzes the prenylation of para-hydroxybenzoate (PHB) with an all-trans polyprenyl group. Mediates the second step in the final reaction sequence of ubiquinone-8 (UQ-8) biosynthesis, which is the condensation of the polyisoprenoid side chain with PHB, generating the first membrane-bound Q intermediate 3-octaprenyl-4-hydroxybenzoate. The chain is 4-hydroxybenzoate octaprenyltransferase from Serratia proteamaculans (strain 568).